Reading from the N-terminus, the 445-residue chain is 3-phosphoshikimate 1-carboxyvinyltransferase (445 aa).

K28, S29, and R33 together coordinate 3-phosphoshikimate. Phosphoenolpyruvate is bound at residue K28. 2 residues coordinate phosphoenolpyruvate: G102 and R130. Residues S179, S180, Q181, E330, and H357 each contribute to the 3-phosphoshikimate site. A phosphoenolpyruvate-binding site is contributed by Q181. The active-site Proton acceptor is the E330. Phosphoenolpyruvate contacts are provided by R361, R405, and K430.

This sequence belongs to the EPSP synthase family. In terms of assembly, monomer.

It is found in the cytoplasm. The catalysed reaction is 3-phosphoshikimate + phosphoenolpyruvate = 5-O-(1-carboxyvinyl)-3-phosphoshikimate + phosphate. It participates in metabolic intermediate biosynthesis; chorismate biosynthesis; chorismate from D-erythrose 4-phosphate and phosphoenolpyruvate: step 6/7. Its function is as follows. Catalyzes the transfer of the enolpyruvyl moiety of phosphoenolpyruvate (PEP) to the 5-hydroxyl of shikimate-3-phosphate (S3P) to produce enolpyruvyl shikimate-3-phosphate and inorganic phosphate. The polypeptide is 3-phosphoshikimate 1-carboxyvinyltransferase (Bifidobacterium longum (strain DJO10A)).